The sequence spans 595 residues: Coagulation factor XII (595 aa).

A signal peptide spans 1–19; it reads MTALLFLGSLLMSLDLTLS. The Fibronectin type-II domain maps to 41–89; the sequence is VDGKLCHFPFQYHRRLYHKCIHKGQPGSRPWCATTPNFDEDQQWGYCLE. Disulfide bonds link C46–C72, C60–C87, C97–C109, C103–C118, C120–C129, C134–C162, C160–C169, C177–C188, C182–C197, C199–C208, C216–C294, C237–C276, and C265–C289. The region spanning 93–130 is the EGF-like 1 domain; that stretch reads VKDHCSKHSPCHKGGTCVNTPNGPHCLCPEHLTGKHCQ. O-linked (Fuc) threonine glycosylation is present at T108. Residues 132 to 172 enclose the Fibronectin type-I domain; it reads EKCFESQLLKFFHENEIWFRTGPGGVARCQCKGPQAVCKLL. The 37-residue stretch at 173 to 209 folds into the EGF-like 2 domain; that stretch reads TSQVCRVNPCLNGGTCLLVEDHRLCHCPAGYAGPFCD. The Kringle domain occupies 215–294; sequence TCYEDRGLSY…SWDYCDLEQC (80 aa). The N-linked (GlcNAc...) asparagine glycan is linked to N248. O-linked (GalNAc...) threonine glycosylation occurs at T298. The disordered stretch occupies residues 302 to 332; that stretch reads PVSPESHDMLKPRPPILQSSPRDSTRNQNVV. S307 carries an O-linked (GalNAc...) serine glycan. A compositionally biased stretch (polar residues) spans 318–332; that stretch reads LQSSPRDSTRNQNVV. A glycan (O-linked (GalNAc...) threonine) is linked at T326. 7 disulfide bridges follow: C340–C466, C378–C394, C386–C455, C417–C420, C480–C549, C512–C528, and C539–C570. One can recognise a Peptidase S1 domain in the interval 354 to 594; that stretch reads VVGGLVALPG…YLDWIQEHTA (241 aa). The active-site Charge relay system is H393. N-linked (GlcNAc...) asparagine glycosylation occurs at N414. The Charge relay system role is filled by D442. S543 serves as the catalytic Charge relay system.

It belongs to the peptidase S1 family. Interacts with HRG; the interaction, which is enhanced in the presence of zinc ions and inhibited by heparin-binding, inhibits factor XII autoactivation and contact-initiated coagulation. O- and N-glycosylated.

It is found in the secreted. The enzyme catalyses Selective cleavage of Arg-|-Ile bonds in factor VII to form factor VIIa and factor XI to form factor XIa.. Its activity is regulated as follows. Activity is promoted in the presence of negatively charged surfaces. Functionally, factor XII is a serum glycoprotein that participates in the initiation of blood coagulation, fibrinolysis, and the generation of bradykinin and angiotensin. Prekallikrein is cleaved by factor XII to form kallikrein, which then cleaves factor XII first to alpha-factor XIIa and then trypsin cleaves it to beta-factor XIIa. Alpha-factor XIIa activates factor XI to factor XIa. The chain is Coagulation factor XII (F12) from Rattus norvegicus (Rat).